A 184-amino-acid chain; its full sequence is Ribosome-recycling factor (184 aa).

It belongs to the RRF family.

The protein localises to the cytoplasm. Its function is as follows. Responsible for the release of ribosomes from messenger RNA at the termination of protein biosynthesis. May increase the efficiency of translation by recycling ribosomes from one round of translation to another. In Caldicellulosiruptor saccharolyticus (strain ATCC 43494 / DSM 8903 / Tp8T 6331), this protein is Ribosome-recycling factor.